The following is a 196-amino-acid chain: Pyridoxal 5'-phosphate synthase subunit PdxT (196 aa).

Position 47–49 (47–49 (GES)) interacts with L-glutamine. Residue cysteine 79 is the Nucleophile of the active site. L-glutamine contacts are provided by residues arginine 106 and 134–135 (IR). Active-site charge relay system residues include histidine 170 and glutamate 172.

This sequence belongs to the glutaminase PdxT/SNO family. In the presence of PdxS, forms a dodecamer of heterodimers. Only shows activity in the heterodimer.

The enzyme catalyses aldehydo-D-ribose 5-phosphate + D-glyceraldehyde 3-phosphate + L-glutamine = pyridoxal 5'-phosphate + L-glutamate + phosphate + 3 H2O + H(+). It catalyses the reaction L-glutamine + H2O = L-glutamate + NH4(+). It functions in the pathway cofactor biosynthesis; pyridoxal 5'-phosphate biosynthesis. Its function is as follows. Catalyzes the hydrolysis of glutamine to glutamate and ammonia as part of the biosynthesis of pyridoxal 5'-phosphate. The resulting ammonia molecule is channeled to the active site of PdxS. This is Pyridoxal 5'-phosphate synthase subunit PdxT from Bacillus licheniformis (strain ATCC 14580 / DSM 13 / JCM 2505 / CCUG 7422 / NBRC 12200 / NCIMB 9375 / NCTC 10341 / NRRL NRS-1264 / Gibson 46).